Consider the following 289-residue polypeptide: ATP synthase subunit a (289 aa).

Helical transmembrane passes span 43 to 63, 101 to 121, 160 to 180, 193 to 213, 232 to 252, and 259 to 279; these read AFHVDTLGWSVALGLIFVLIF, SAVIAPLALTIFVWVFLMNAV, LSVFALIIFYSIKVKGIGGFI, LFVQALLIPVNFLLEFVTLIA, VFILIAVMFGSGLLWLSGLGV, and AVFHILIITLQAFIFMMLTIV.

It belongs to the ATPase A chain family. In terms of assembly, F-type ATPases have 2 components, CF(1) - the catalytic core - and CF(0) - the membrane proton channel. CF(1) has five subunits: alpha(3), beta(3), gamma(1), delta(1), epsilon(1). CF(0) has three main subunits: a(1), b(2) and c(9-12). The alpha and beta chains form an alternating ring which encloses part of the gamma chain. CF(1) is attached to CF(0) by a central stalk formed by the gamma and epsilon chains, while a peripheral stalk is formed by the delta and b chains.

The protein localises to the cell inner membrane. In terms of biological role, key component of the proton channel; it plays a direct role in the translocation of protons across the membrane. This Pseudomonas savastanoi pv. phaseolicola (strain 1448A / Race 6) (Pseudomonas syringae pv. phaseolicola (strain 1448A / Race 6)) protein is ATP synthase subunit a.